A 324-amino-acid chain; its full sequence is Autolytic lysozyme (324 aa).

Active-site residues include D5 and E91. 5 consecutive repeat copies span residues L212–F234, Q235–A254, Q255–I277, Q278–W300, and Q301–N324. The segment at L212–N324 is 5 X 23 AA tandem repeats.

It belongs to the glycosyl hydrolase 25 family. In terms of assembly, monomer.

Its subcellular location is the secreted. The protein resides in the cytoplasm. The catalysed reaction is Hydrolysis of (1-&gt;4)-beta-linkages between N-acetylmuramic acid and N-acetyl-D-glucosamine residues in a peptidoglycan and between N-acetyl-D-glucosamine residues in chitodextrins.. The protein is Autolytic lysozyme (lyc) of Clostridium acetobutylicum (strain ATCC 824 / DSM 792 / JCM 1419 / IAM 19013 / LMG 5710 / NBRC 13948 / NRRL B-527 / VKM B-1787 / 2291 / W).